Consider the following 508-residue polypeptide: Photosystem II CP47 reaction center protein (508 aa).

6 helical membrane passes run Ala-21–Ser-36, Ile-101–Trp-115, Gly-140–Phe-156, Ile-203–Ser-218, Val-237–Val-252, and Thr-457–Arg-472.

The protein belongs to the PsbB/PsbC family. PsbB subfamily. PSII is composed of 1 copy each of membrane proteins PsbA, PsbB, PsbC, PsbD, PsbE, PsbF, PsbH, PsbI, PsbJ, PsbK, PsbL, PsbM, PsbT, PsbX, PsbY, PsbZ, Psb30/Ycf12, at least 3 peripheral proteins of the oxygen-evolving complex and a large number of cofactors. It forms dimeric complexes. It depends on Binds multiple chlorophylls. PSII binds additional chlorophylls, carotenoids and specific lipids. as a cofactor.

Its subcellular location is the plastid. The protein resides in the chloroplast thylakoid membrane. In terms of biological role, one of the components of the core complex of photosystem II (PSII). It binds chlorophyll and helps catalyze the primary light-induced photochemical processes of PSII. PSII is a light-driven water:plastoquinone oxidoreductase, using light energy to abstract electrons from H(2)O, generating O(2) and a proton gradient subsequently used for ATP formation. This is Photosystem II CP47 reaction center protein from Brachypodium distachyon (Purple false brome).